A 632-amino-acid polypeptide reads, in one-letter code: Eukaryotic peptide chain release factor GTP-binding subunit ERF3B (632 aa).

Disordered regions lie at residues 1-31 (MDLG…GDGI) and 162-200 (SEAK…SIPS). Positions 178–192 (ESVKEVMEEKEEVRK) are enriched in basic and acidic residues. One can recognise a tr-type G domain in the interval 205–429 (KEHVNVVFIG…YLDSLPNFNR (225 aa)). A G1 region spans residues 214-221 (GHVDAGKS). 217–222 (DAGKST) is a binding site for GTP. The interval 270–274 (GKTVE) is G2. The tract at residues 291 to 294 (DAPG) is G3. Residues 353 to 356 (NKMD) and 395 to 397 (SGL) contribute to the GTP site. The segment at 353-356 (NKMD) is G4. The interval 395–397 (SGL) is G5.

This sequence belongs to the TRAFAC class translation factor GTPase superfamily. Classic translation factor GTPase family. ERF3 subfamily. In terms of assembly, component of the eRF1-eRF3-GTP ternary complex, composed of ETF1/ERF1 and ERF3 (GSPT1/ERF3A or GSPT2/ERF3B) and GTP. Component of the transient SURF (SMG1-UPF1-eRF1-eRF3) complex. Interacts with UPF1 and PABPC1. In terms of tissue distribution, highly expressed in brain. Moderately expressed in spleen and lung. Weakly expressed in heart, liver and kidney. Expression during the cell-cycle progression is constant.

It is found in the cytoplasm. It carries out the reaction GTP + H2O = GDP + phosphate + H(+). In terms of biological role, GTPase component of the eRF1-eRF3-GTP ternary complex, a ternary complex that mediates translation termination in response to the termination codons UAA, UAG and UGA. GSPT2/ERF3B mediates ETF1/ERF1 delivery to stop codons: The eRF1-eRF3-GTP complex binds to a stop codon in the ribosomal A-site. GTP hydrolysis by GSPT2/ERF3B induces a conformational change that leads to its dissociation, permitting ETF1/ERF1 to accommodate fully in the A-site. Component of the transient SURF complex which recruits UPF1 to stalled ribosomes in the context of nonsense-mediated decay (NMD) of mRNAs containing premature stop codons. The polypeptide is Eukaryotic peptide chain release factor GTP-binding subunit ERF3B (Gspt2) (Mus musculus (Mouse)).